Here is a 78-residue protein sequence, read N- to C-terminus: HssA/B-like protein 30 (78 aa).

Residues 1-32 (MTLFSSITSISKTNTSSKSSVNSLSGSSLSMG) are disordered.

This sequence belongs to the hssA/B family.

This chain is HssA/B-like protein 30 (hssl30), found in Dictyostelium discoideum (Social amoeba).